A 243-amino-acid chain; its full sequence is Uridylate kinase (243 aa).

14–17 (KLSG) is a binding site for ATP. Glycine 57 contacts UMP. Residues glycine 58 and arginine 62 each coordinate ATP. UMP is bound by residues aspartate 77 and 139–146 (TGRPYFTT). Residues asparagine 167, tyrosine 173, and aspartate 176 each coordinate ATP.

The protein belongs to the UMP kinase family. As to quaternary structure, homohexamer.

It is found in the cytoplasm. It carries out the reaction UMP + ATP = UDP + ADP. It functions in the pathway pyrimidine metabolism; CTP biosynthesis via de novo pathway; UDP from UMP (UMPK route): step 1/1. With respect to regulation, inhibited by UTP. Catalyzes the reversible phosphorylation of UMP to UDP. The sequence is that of Uridylate kinase from Mycoplasmopsis pulmonis (strain UAB CTIP) (Mycoplasma pulmonis).